The chain runs to 2335 residues: Serine/threonine-protein kinase tor1 (2335 aa).

HEAT repeat units lie at residues 1–31, 164–201, 331–371, 410–449, 474–512, 522–560, 562–596, 642–679, 684–722, 728–766, 843–880, 904–923, 924–961, 964–1003, and 1005–1042; these read MEYF…SSTK, LYIS…VVCQ, PYLQ…AVKL, PIQE…AREP, YSLI…RDPI, ESVA…RHLA, PDNI…YNPA, PYIQ…VEGE, DVRG…RSGY, LDYP…LDPY, VFLP…IIGP, LLVI…DEFK, FYLP…FGSN, EYMH…SVNF, and DHAS…QLGY. Residues 1226-1781 form the FAT domain; that stretch reads VISAHASKCN…VYSLTVSSKS (556 aa). In terms of domain architecture, PI3K/PI4K catalytic spans 1955–2269; the sequence is FHHTFEVISS…ARHADYAALS (315 aa). Residues 1961-1967 are G-loop; sequence VISSKQR. Residue T1972 is modified to Phosphothreonine; by PKB/AKT1. Residues 2134-2142 are catalytic loop; it reads GLGDRHPSN. Residues 2154–2179 are activation loop; the sequence is HIDFGDCFEVAMHREKFPEKIPFRLT. An FATC domain is found at 2303 to 2335; that stretch reads EQLPVKAQVEKLIQQATAPENLCRCYVGWCSFW.

It belongs to the PI3/PI4-kinase family. As to quaternary structure, the target of rapamycin complex 2 (TORC2) is composed of at least bit61, pop3/wat1, sin1, ste20 and tor1. Phosphorylation at Thr-1972 in the ATP-binding region by AKT1 strongly reduces kinase activity.

The protein resides in the cytoplasm. The catalysed reaction is L-seryl-[protein] + ATP = O-phospho-L-seryl-[protein] + ADP + H(+). It carries out the reaction L-threonyl-[protein] + ATP = O-phospho-L-threonyl-[protein] + ADP + H(+). In terms of biological role, catalytic component of TORC2, which regulates multiple cellular processes to control cell growth in response to environmental signals. In response to signals, TORC2 phosphorylates AGC protein kinase family members. TORC2 is required for cell survival under various stress conditions. TORC2 positively controls G1 cell-cycle arrest, sexual development and amino acid uptake. Positively regulates amino acid uptake through the control of expression of amino acid permeases. Responsible for the phosphorylation of AGC kinase gad8 at 'Ser-527' and 'Ser-546', activating gad8 kinase activity and promoting sexual development. This Schizosaccharomyces pombe (strain 972 / ATCC 24843) (Fission yeast) protein is Serine/threonine-protein kinase tor1.